Here is a 201-residue protein sequence, read N- to C-terminus: MSRYLGPRFKIIRRLKTLPGLTSKRPKYKKRVRRRFSRPWWKKSQHLICLQEKQKIRFHYGLTERQLRQYINIAKRAQGSTGQVLLQLLEMRLDNIIFQLGIARTIPAARQIVNHRHVLVNGRVVDIPSYRCKPQDVLTIKTKNPEELRTIINKNRSKFRRKVPYHLTLDLAQNKGIVNKIIDRKDIQLKIQEMLVIEYYC.

Positions 91 to 151 (MRLDNIIFQL…TKNPEELRTI (61 aa)) constitute an S4 RNA-binding domain.

Belongs to the universal ribosomal protein uS4 family. In terms of assembly, part of the 30S ribosomal subunit. Contacts protein S5. The interaction surface between S4 and S5 is involved in control of translational fidelity.

The protein resides in the plastid. It localises to the chloroplast. In terms of biological role, one of the primary rRNA binding proteins, it binds directly to 16S rRNA where it nucleates assembly of the body of the 30S subunit. With S5 and S12 plays an important role in translational accuracy. This is Small ribosomal subunit protein uS4c (rps4) from Welwitschia mirabilis (Tree tumbo).